The following is a 798-amino-acid chain: MSSSPVNVKKLKVSELKEELKKRRLSDKGLKADLMDRLQAALDNEAGGRPAMEPGNGSLDLGGDAAGRSGAGLEQEAAAGAEDDEEEEGIAALDGDQMELGEENGAAGAADAGAMEEEEAASEDENGDDQGFQEGEDELGDEEEGAGDENGHGEQQSQPPAAAQQASQQRGPGKEAAGKSSGPTSLFAVTVAPPGARQGQQQAGGDGKTEQKAGDKKRGVKRPREDHGRGYFEYIEENKYSRAKSPQPPVEEEDEHFDDTVVCLDTYNCDLHFKISRDRLSASSLTMESFAFLWAGGRASYGVSKGKVCFEMKVTEKIPVRHLYTKDIDIHEVRIGWSLTTSGMLLGEEEFSYGYSLKGIKTCNCETEDYGEKFDENDVITCFANFETDEVELSYAKNGQDLGVAFKISKEVLADRPLFPHVLCHNCAVEFNFGQKEKPYFPIPEDCTFIQNVPLEDRVRGPKGPEEKKDCEVVMMIGLPGAGKTTWVTKHAAENPGKYNILGTNTIMDKMMVAGFKKQMADTGKLNTLLQRAPQCLGKFIEIAARKKRNFILDQTNVSAAAQRRKMCLFAGFQRKAVVVCPKDEDYKQRTQKKAEVEGKDLPEHAVLKMKGNFTLPEVAECFDEITYVELQKEEAQKLLEQYKEESKKALPPEKKQNTGSKKSNKNKSGKNQFNRGGGHRGRGGFNMRGGNFRGGAPGNRGGYNRRGNMPQRGGGGGSGGIGYPYPRGPVFPGRGGYSNRGNYNRGGMPNRGNYNQNFRGRGNNRGYKNQSQGYNQWQQGQFWGQKPWSQHYHQGYY.

Residue Ser2 is modified to N-acetylserine. Position 4 is a phosphoserine (Ser4). The SAP domain occupies 8 to 42; it reads VKKLKVSELKEELKKRRLSDKGLKADLMDRLQAAL. An N6-acetyllysine mark is found at Lys17 and Lys21. Positions 41–229 are disordered; that stretch reads ALDNEAGGRP…VKRPREDHGR (189 aa). Ser58 carries the post-translational modification Phosphoserine. Low complexity-rich tracts occupy residues 71–80 and 103–113; these read AGLEQEAAAG and ENGAAGAADAG. 2 stretches are compositionally biased toward acidic residues: residues 114-128 and 134-147; these read AMEE…ENGD and EGED…EGAG. A compositionally biased stretch (low complexity) spans 153–169; it reads GEQQSQPPAAAQQASQQ. Lys179 is modified (N6-acetyllysine). Residue Ser180 is modified to ADP-ribosylserine. Low complexity predominate over residues 192-203; sequence APPGARQGQQQA. Residues 207–229 show a composition bias toward basic and acidic residues; sequence GKTEQKAGDKKRGVKRPREDHGR. Residue Arg229 is modified to Citrulline. Residue Lys239 is modified to N6-acetyllysine; alternate. Residue Lys239 forms a Glycyl lysine isopeptide (Lys-Gly) (interchain with G-Cter in SUMO1); alternate linkage. Lys239 participates in a covalent cross-link: Glycyl lysine isopeptide (Lys-Gly) (interchain with G-Cter in SUMO2); alternate. At Tyr240 the chain carries Phosphotyrosine. Ser241 and Ser245 each carry phosphoserine. A B30.2/SPRY domain is found at 242-438; it reads RAKSPQPPVE…VEFNFGQKEK (197 aa). Thr260 carries the phosphothreonine modification. Lys326 bears the N6-acetyllysine mark. The tract at residues 462 to 646 is ATPase domain; that stretch reads PKGPEEKKDC…QKLLEQYKEE (185 aa). Lys469 participates in a covalent cross-link: Glycyl lysine isopeptide (Lys-Gly) (interchain with G-Cter in SUMO2). 478 to 485 provides a ligand contact to ATP; it reads GLPGAGKT. Lys490 and Lys498 each carry N6-acetyllysine; alternate. Glycyl lysine isopeptide (Lys-Gly) (interchain with G-Cter in SUMO2); alternate cross-links involve residues Lys490 and Lys498. Thr506 is modified (phosphothreonine). Lys510 is covalently cross-linked (Glycyl lysine isopeptide (Lys-Gly) (interchain with G-Cter in SUMO2)). An N6-acetyllysine modification is found at Lys525. An N6-acetyllysine; alternate modification is found at Lys539. Lys539 is covalently cross-linked (Glycyl lysine isopeptide (Lys-Gly) (interchain with G-Cter in SUMO2); alternate). A Glycyl lysine isopeptide (Lys-Gly) (interchain with G-Cter in SUMO2) cross-link involves residue Lys548. Thr556 is modified (phosphothreonine). Residues Lys583 and Lys600 each participate in a glycyl lysine isopeptide (Lys-Gly) (interchain with G-Cter in SUMO2) cross-link. The tract at residues 585–600 is actin-binding; it reads EDYKQRTQKKAEVEGK. Lys609 bears the N6-acetyllysine; alternate mark. Lys609 is covalently cross-linked (Glycyl lysine isopeptide (Lys-Gly) (interchain with G-Cter in SUMO2); alternate). Residues 624–651 adopt a coiled-coil conformation; it reads DEITYVELQKEEAQKLLEQYKEESKKAL. Glycyl lysine isopeptide (Lys-Gly) (interchain with G-Cter in SUMO2) cross-links involve residues Lys638 and Lys644. Positions 645–657 are enriched in basic and acidic residues; that stretch reads EESKKALPPEKKQ. Residues 645–727 form a disordered region; the sequence is EESKKALPPE…GSGGIGYPYP (83 aa). Arg676 is modified (omega-N-methylarginine). The segment covering 684–702 has biased composition (gly residues); the sequence is GGFNMRGGNFRGGAPGNRG. An RNA-binding RGG-box region spans residues 688 to 713; that stretch reads MRGGNFRGGAPGNRGGYNRRGNMPQR. Residues Arg689, Arg694, and Arg701 each carry the asymmetric dimethylarginine modification. Asymmetric dimethylarginine; alternate is present on residues Arg707 and Arg713. Omega-N-methylarginine; alternate is present on residues Arg707 and Arg713. Residues 713-723 show a composition bias toward gly residues; the sequence is RGGGGGSGGIG. Residues Arg728 and Arg735 each carry the asymmetric dimethylarginine modification. The segment at 743–772 is disordered; that stretch reads NYNRGGMPNRGNYNQNFRGRGNNRGYKNQS. Lys787 bears the N6-acetyllysine; alternate mark. A Glycyl lysine isopeptide (Lys-Gly) (interchain with G-Cter in SUMO2); alternate cross-link involves residue Lys787.

Oligomer (via ATPase domain and RNA-binding RGG-box region); oligomerization occurs upon ATP-binding in a chromatin-associated RNAs (caRNAs)- and transcription-dependent manner and is required for chromatin decompaction. ATP hydrolysis is required to cycle from an oligomeric to monomeric state to compact chromatin. Component of the coding region determinant (CRD)-mediated complex, composed of DHX9, HNRNPU, IGF2BP1, SYNCRIP and YBX1. Identified in the spliceosome C complex. Identified in a IGF2BP1-dependent mRNP granule complex containing untranslated mRNAs. Associates with heterogeneous nuclear ribonucleoprotein (hnRNP) particles. Associates (via middle region) with the C-terminal domain (CTD) RNA polymerase II (Pol II) holoenzyme; this association occurs in a RNA-independent manner. Associates (via middle region) with the core-TFIIH basal transcription factor complex; this association inhibits the CTD phosphorylation of RNA polymerase II holoenzyme by down-regulating TFIIH kinase activity. Associates with the telomerase holoenzyme complex. Associates with spindle microtubules (MTs) in a TPX2-dependent manner. Interacts (via C-terminus) with actin; this interaction is direct and mediates association with the phosphorylated CTD of RNA polymerase II and is disrupted in presence of the long non-coding H19 RNA. Interacts with AURKA. Interacts (via C-terminus) with CBX5; this interaction is, at least in part, RNA-dependent. Interacts with CR2. Interacts with CRY1. Interacts (via C-terminus) with EP300; this interaction enhances DNA-binding to nuclear scaffold/matrix attachment region (S/MAR) elements. Interacts with ERBB4. Interacts with GEMIN5. Interacts with IGF2BP1. Interacts with IGF2BP2 and IGF2BP3. Interacts with NCL; this interaction occurs during mitosis. Interacts (via C-terminus) with NR3C1 (via C-terminus). Interacts with PLK1; this interaction induces phosphorylation of HNRNPU at Ser-58 in mitosis. Interacts with POU3F4. Interacts with SMARCA4; this interaction occurs in embryonic stem cells and stimulates global Pol II-mediated transcription. Interacts (via C-terminus) with TOP2A; this interaction protects the topoisomerase TOP2A from degradation and positively regulates the relaxation of supercoiled DNA by TOP2A in a RNA-dependent manner. Interacts with TPX2; this interaction recruits HNRNPU to spindle microtubules (MTs). Interacts with UBQLN2. Interacts (via RNA-binding RGG-box region) with ZBTB7B; the interaction facilitates the recruitment of long non-coding RNA Blnc1 by ZBTB7B. Interacts with ERCC6. Post-translationally, cleaved at Asp-94 by CASP3 during T-cell apoptosis, resulting in a loss of DNA- and chromatin-binding activities. Extensively phosphorylated. Phosphorylated on Ser-58 by PLK1 and dephosphorylated by protein phosphatase 2A (PP2A) in mitosis. In terms of processing, arg-707 and Arg-713 are dimethylated, probably to asymmetric dimethylarginine. Post-translationally, citrullinated by PADI4.

Its subcellular location is the nucleus. It is found in the nucleus matrix. The protein localises to the chromosome. It localises to the nucleus speckle. The protein resides in the cytoplasm. Its subcellular location is the cytoskeleton. It is found in the microtubule organizing center. The protein localises to the centrosome. It localises to the centromere. The protein resides in the kinetochore. Its subcellular location is the spindle. It is found in the spindle pole. The protein localises to the midbody. It localises to the cell surface. The protein resides in the cytoplasmic granule. DNA- and RNA-binding protein involved in several cellular processes such as nuclear chromatin organization, telomere-length regulation, transcription, mRNA alternative splicing and stability, Xist-mediated transcriptional silencing and mitotic cell progression. Plays a role in the regulation of interphase large-scale gene-rich chromatin organization through chromatin-associated RNAs (caRNAs) in a transcription-dependent manner, and thereby maintains genomic stability. Required for the localization of the long non-coding Xist RNA on the inactive chromosome X (Xi) and the subsequent initiation and maintenance of X-linked transcriptional gene silencing during X-inactivation. Required for the topoisomerase TOP2A protein stability and activity in a RNA-dependent manner. Plays a role as a RNA polymerase II (Pol II) holoenzyme transcription regulator. Promotes transcription initiation by direct association with the core-TFIIH basal transcription factor complex for the assembly of a functional pre-initiation complex with Pol II in a actin-dependent manner. Blocks Pol II transcription elongation activity by inhibiting the C-terminal domain (CTD) phosphorylation of Pol II and dissociates from Pol II pre-initiation complex prior to productive transcription elongation. Positively regulates CBX5-induced transcriptional gene silencing and retention of CBX5 in the nucleus. Negatively regulates glucocorticoid-mediated transcriptional activation. Key regulator of transcription initiation and elongation in embryonic stem cells upon leukemia inhibitory factor (LIF) signaling. Involved in the long non-coding RNA H19-mediated Pol II transcriptional repression. Participates in the circadian regulation of the core clock component BMAL1 transcription. Plays a role in the regulation of telomere length. Plays a role as a global pre-mRNA alternative splicing modulator by regulating U2 small nuclear ribonucleoprotein (snRNP) biogenesis. Plays a role in mRNA stability. Component of the CRD-mediated complex that promotes MYC mRNA stabilization. Enhances the expression of specific genes, such as tumor necrosis factor TNFA, by regulating mRNA stability, possibly through binding to the 3'-untranslated region (UTR). Plays a role in mitotic cell cycle regulation. Involved in the formation of stable mitotic spindle microtubules (MTs) attachment to kinetochore, spindle organization and chromosome congression. Phosphorylation at Ser-58 by PLK1 is required for chromosome alignement and segregation and progression through mitosis. Also contributes to the targeting of AURKA to mitotic spindle MTs. Binds to double- and single-stranded DNA and RNA, poly(A), poly(C) and poly(G) oligoribonucleotides. Binds to chromatin-associated RNAs (caRNAs). Associates with chromatin to scaffold/matrix attachment region (S/MAR) elements in DNA. Associates with chromatin in a chromatin-associated RNAs (caRNAs)-dependent manner. Binds to the Xist RNA. Binds the long non-coding H19 RNA. Binds to SMN1/2 pre-mRNAs at G/U-rich regions. Binds to small nuclear RNAs (snRNAs). Binds to the 3'-UTR of TNFA mRNA. Binds (via RNA-binding RGG-box region) to the long non-coding Xist RNA; this binding is direct and bridges the Xist RNA and the inactive chromosome X (Xi). Also negatively regulates embryonic stem cell differentiation upon LIF signaling. Required for embryonic development. Binds to brown fat long non-coding RNA 1 (Blnc1); facilitates the recruitment of Blnc1 by ZBTB7B required to drive brown and beige fat development and thermogenesis. The chain is Heterogeneous nuclear ribonucleoprotein U from Rattus norvegicus (Rat).